A 552-amino-acid polypeptide reads, in one-letter code: uncharacterized protein (552 aa).

29–36 lines the ATP pocket; sequence GENAWGKS. Residues 379–469 form the Toprim domain; it reads RCWLLVEGET…AEREHLTALP (91 aa).

This is an uncharacterized protein from Escherichia coli (strain K12).